The primary structure comprises 172 residues: Lipoprotein signal peptidase (172 aa).

2 consecutive transmembrane segments (helical) span residues Glu-70–Trp-90 and Ala-94–Asp-114. Residues Asp-123 and Asp-142 contribute to the active site. The chain crosses the membrane as a helical span at residues Pro-134–Leu-154.

This sequence belongs to the peptidase A8 family.

The protein resides in the cell inner membrane. It carries out the reaction Release of signal peptides from bacterial membrane prolipoproteins. Hydrolyzes -Xaa-Yaa-Zaa-|-(S,diacylglyceryl)Cys-, in which Xaa is hydrophobic (preferably Leu), and Yaa (Ala or Ser) and Zaa (Gly or Ala) have small, neutral side chains.. It participates in protein modification; lipoprotein biosynthesis (signal peptide cleavage). Functionally, this protein specifically catalyzes the removal of signal peptides from prolipoproteins. The polypeptide is Lipoprotein signal peptidase (Rhizorhabdus wittichii (strain DSM 6014 / CCUG 31198 / JCM 15750 / NBRC 105917 / EY 4224 / RW1) (Sphingomonas wittichii)).